We begin with the raw amino-acid sequence, 260 residues long: Triosephosphate isomerase (260 aa).

Residue asparagine 11–lysine 13 coordinates substrate. Histidine 103 functions as the Electrophile in the catalytic mechanism. Residue glutamate 175 is the Proton acceptor of the active site. Substrate-binding positions include glycine 181, serine 220, and glycine 241–glycine 242.

It belongs to the triosephosphate isomerase family. As to quaternary structure, homodimer.

The protein localises to the cytoplasm. It carries out the reaction D-glyceraldehyde 3-phosphate = dihydroxyacetone phosphate. Its pathway is carbohydrate biosynthesis; gluconeogenesis. It functions in the pathway carbohydrate degradation; glycolysis; D-glyceraldehyde 3-phosphate from glycerone phosphate: step 1/1. Involved in the gluconeogenesis. Catalyzes stereospecifically the conversion of dihydroxyacetone phosphate (DHAP) to D-glyceraldehyde-3-phosphate (G3P). This chain is Triosephosphate isomerase, found in Shewanella denitrificans (strain OS217 / ATCC BAA-1090 / DSM 15013).